A 357-amino-acid polypeptide reads, in one-letter code: Arginine kinase (357 aa).

Position 2 is an N-acetylalanine (A2). The Phosphagen kinase N-terminal domain maps to K9–K91. Residue G64–Y68 participates in L-arginine binding. Residues F119–M356 enclose the Phosphagen kinase C-terminal domain. Residues S122–R126 and H185 contribute to the ATP site. Residue E225 participates in L-arginine binding. An ATP-binding site is contributed by R229. C271 contacts L-arginine. ATP contacts are provided by residues R280 to H284 and R309 to E314. An L-arginine-binding site is contributed by E314.

It belongs to the ATP:guanido phosphotransferase family.

The enzyme catalyses L-arginine + ATP = N(omega)-phospho-L-arginine + ADP + H(+). The protein is Arginine kinase of Eriocheir sinensis (Chinese mitten crab).